The primary structure comprises 205 residues: Pyridoxine/pyridoxamine 5'-phosphate oxidase (205 aa).

Residues 53–58 (RMVLLK), 68–69 (YT), Lys75, and Gln97 each bind FMN. Position 58 (Lys58) interacts with substrate. Residues Tyr115, Arg119, and Ser123 each contribute to the substrate site. FMN contacts are provided by residues 132–133 (QS) and Trp177. 183–185 (RLH) contributes to the substrate binding site. Arg187 serves as a coordination point for FMN.

It belongs to the pyridoxamine 5'-phosphate oxidase family. As to quaternary structure, homodimer. The cofactor is FMN.

It carries out the reaction pyridoxamine 5'-phosphate + O2 + H2O = pyridoxal 5'-phosphate + H2O2 + NH4(+). The catalysed reaction is pyridoxine 5'-phosphate + O2 = pyridoxal 5'-phosphate + H2O2. It participates in cofactor metabolism; pyridoxal 5'-phosphate salvage; pyridoxal 5'-phosphate from pyridoxamine 5'-phosphate: step 1/1. Its pathway is cofactor metabolism; pyridoxal 5'-phosphate salvage; pyridoxal 5'-phosphate from pyridoxine 5'-phosphate: step 1/1. Functionally, catalyzes the oxidation of either pyridoxine 5'-phosphate (PNP) or pyridoxamine 5'-phosphate (PMP) into pyridoxal 5'-phosphate (PLP). This is Pyridoxine/pyridoxamine 5'-phosphate oxidase from Mesorhizobium japonicum (strain LMG 29417 / CECT 9101 / MAFF 303099) (Mesorhizobium loti (strain MAFF 303099)).